The primary structure comprises 940 residues: Isoleucine--tRNA ligase (940 aa).

Residues 58 to 68 (PYANGSIHIGH) carry the 'HIGH' region motif. Residue Glu564 coordinates L-isoleucyl-5'-AMP. Residues 605–609 (KMSKS) carry the 'KMSKS' region motif. Position 608 (Lys608) interacts with ATP. Zn(2+) contacts are provided by Cys903, Cys906, Cys923, and Cys926.

The protein belongs to the class-I aminoacyl-tRNA synthetase family. IleS type 1 subfamily. Monomer. The cofactor is Zn(2+).

It is found in the cytoplasm. It carries out the reaction tRNA(Ile) + L-isoleucine + ATP = L-isoleucyl-tRNA(Ile) + AMP + diphosphate. Functionally, catalyzes the attachment of isoleucine to tRNA(Ile). As IleRS can inadvertently accommodate and process structurally similar amino acids such as valine, to avoid such errors it has two additional distinct tRNA(Ile)-dependent editing activities. One activity is designated as 'pretransfer' editing and involves the hydrolysis of activated Val-AMP. The other activity is designated 'posttransfer' editing and involves deacylation of mischarged Val-tRNA(Ile). This is Isoleucine--tRNA ligase from Shewanella sp. (strain MR-7).